Here is a 236-residue protein sequence, read N- to C-terminus: E3 ubiquitin-protein ligase ATL41 (236 aa).

Residues 31 to 51 (IMLAAVASLSGVILIVFALHL) form a helical membrane-spanning segment. An RING-type; atypical zinc finger spans residues 108 to 150 (CAVCLSVLKEQDKARELPNCKHIFHVDCVDTWLTTCSTCPVCR).

This sequence belongs to the RING-type zinc finger family. ATL subfamily.

It localises to the membrane. The catalysed reaction is S-ubiquitinyl-[E2 ubiquitin-conjugating enzyme]-L-cysteine + [acceptor protein]-L-lysine = [E2 ubiquitin-conjugating enzyme]-L-cysteine + N(6)-ubiquitinyl-[acceptor protein]-L-lysine.. It functions in the pathway protein modification; protein ubiquitination. E3 ubiquitin-protein ligase able to catalyze polyubiquitination with ubiquitin-conjugating enzyme E2 UBC8, UBC10, UBC11, UBC28, UBC29, UBC30, UBC35 and UBC36 in vitro. The protein is E3 ubiquitin-protein ligase ATL41 (ATL41) of Arabidopsis thaliana (Mouse-ear cress).